Reading from the N-terminus, the 346-residue chain is Protein RecA (346 aa).

68–75 (GPESSGKT) serves as a coordination point for ATP.

The protein belongs to the RecA family.

Its subcellular location is the cytoplasm. In terms of biological role, can catalyze the hydrolysis of ATP in the presence of single-stranded DNA, the ATP-dependent uptake of single-stranded DNA by duplex DNA, and the ATP-dependent hybridization of homologous single-stranded DNAs. It interacts with LexA causing its activation and leading to its autocatalytic cleavage. The chain is Protein RecA from Heliobacterium modesticaldum (strain ATCC 51547 / Ice1).